We begin with the raw amino-acid sequence, 254 residues long: 5-oxoprolinase subunit A 1 (254 aa).

This sequence belongs to the LamB/PxpA family. As to quaternary structure, forms a complex composed of PxpA, PxpB and PxpC.

The catalysed reaction is 5-oxo-L-proline + ATP + 2 H2O = L-glutamate + ADP + phosphate + H(+). Catalyzes the cleavage of 5-oxoproline to form L-glutamate coupled to the hydrolysis of ATP to ADP and inorganic phosphate. This Burkholderia pseudomallei (strain K96243) protein is 5-oxoprolinase subunit A 1.